A 316-amino-acid chain; its full sequence is Transaldolase (316 aa).

Residue lysine 125 is the Schiff-base intermediate with substrate of the active site.

Belongs to the transaldolase family. Type 1 subfamily. As to quaternary structure, homodimer.

Its subcellular location is the cytoplasm. The enzyme catalyses D-sedoheptulose 7-phosphate + D-glyceraldehyde 3-phosphate = D-erythrose 4-phosphate + beta-D-fructose 6-phosphate. Its pathway is carbohydrate degradation; pentose phosphate pathway; D-glyceraldehyde 3-phosphate and beta-D-fructose 6-phosphate from D-ribose 5-phosphate and D-xylulose 5-phosphate (non-oxidative stage): step 2/3. Its function is as follows. Transaldolase is important for the balance of metabolites in the pentose-phosphate pathway. The sequence is that of Transaldolase from Acidovorax ebreus (strain TPSY) (Diaphorobacter sp. (strain TPSY)).